The chain runs to 143 residues: Large ribosomal subunit protein uL13 (143 aa).

This sequence belongs to the universal ribosomal protein uL13 family. As to quaternary structure, part of the 50S ribosomal subunit.

In terms of biological role, this protein is one of the early assembly proteins of the 50S ribosomal subunit, although it is not seen to bind rRNA by itself. It is important during the early stages of 50S assembly. This Dehalococcoides mccartyi (strain CBDB1) protein is Large ribosomal subunit protein uL13.